The primary structure comprises 215 residues: High mobility group protein B1 (215 aa).

Residue 1-10 (MGKGDPKKPR) coordinates heparin. Residues 1-97 (MGKGDPKKPR…KFKDPNAPKR (97 aa)) form a sufficient for interaction with HAVCR2 region. An N6-acetyllysine mark is found at Lys-3, Lys-7, Lys-8, and Lys-12. Residues 3 to 15 (KGDPKKPRGKMSS) are LPS binding (delipidated). A DNA-binding region (HMG box 1) is located at residues 9-79 (PRGKMSSYAF…RYEREMKTYI (71 aa)). The residue at position 23 (Cys-23) is a Cysteine sulfonic acid (-SO3H); alternate. Cys-23 and Cys-45 are oxidised to a cystine. An NLS 1 region spans residues 27–43 (HKKKHPDASVNFSEFSK). The Nuclear localization signal (NLS) 1 signature appears at 27-43 (HKKKHPDASVNFSEFSK). N6-acetyllysine occurs at positions 28, 29, and 30. An Isoglutamyl lysine isopeptide (Lys-Gln) (interchain with Q-?) cross-link involves residue Lys-28. A Phosphoserine modification is found at Ser-35. Position 43 is an N6-acetyllysine (Lys-43). Isoglutamyl lysine isopeptide (Lys-Gln) (interchain with Q-?) cross-links involve residues Lys-43 and Lys-44. Cys-45 bears the Cysteine sulfonic acid (-SO3H); alternate mark. Residue Lys-68 forms an Isoglutamyl lysine isopeptide (Lys-Gln) (interchain with Q-?) linkage. A disordered region spans residues 76–95 (KTYIPPKGETKKKFKDPNAP). Residues 80–96 (PPKGETKKKFKDPNAPK) form an LPS binding (Lipid A) region. A compositionally biased stretch (basic and acidic residues) spans 83 to 94 (GETKKKFKDPNA). The cytokine-stimulating activity stretch occupies residues 89–108 (FKDPNAPKRPPSAFFLFCSE). Lys-90 bears the N6-acetyllysine mark. A DNA-binding region (HMG box 2) is located at residues 95-163 (PKRPPSAFFL…KYEKDIAAYR (69 aa)). At Ser-100 the chain carries Phosphoserine. Cys-106 is modified (cysteine sulfonic acid (-SO3H)). N6-acetyllysine occurs at positions 127, 128, 141, 172, 173, 177, and 180. The binding to AGER/RAGE stretch occupies residues 150–183 (KLKEKYEKDIAAYRAKGKPDAAKKGVVKAEKSKK). The span at 161–179 (AYRAKGKPDAAKKGVVKAE) shows a compositional bias: basic and acidic residues. The interval 161–215 (AYRAKGKPDAAKKGVVKAEKSKKKKEEEDDEEDEEDEEEEEEEEDEDEEEDDDDE) is disordered. Residues 178-184 (AEKSKKK) form an NLS 2 region. The Nuclear localization signal (NLS) 2 signature appears at 178 to 184 (AEKSKKK). An Isoglutamyl lysine isopeptide (Lys-Gln) (interchain with Q-?) cross-link involves residue Lys-180. The residue at position 181 (Ser-181) is an ADP-ribosylserine. An N6-acetyllysine mark is found at Lys-182, Lys-183, Lys-184, and Lys-185. Residues Lys-182, Lys-183, and Lys-184 each participate in an isoglutamyl lysine isopeptide (Lys-Gln) (interchain with Q-?) cross-link. The segment covering 187–215 (EEDDEEDEEDEEEEEEEEDEDEEEDDDDE) has biased composition (acidic residues).

The protein belongs to the HMGB family. Interacts (fully reduced HMGB1) with CXCL12; probably in a 1:2 ratio involving two molecules of CXCL12, each interacting with one HMG box of HMGB1; inhibited by glycyrrhizin. Associates with the TLR4:LY96 receptor complex. Component of the RAG complex composed of core components RAG1 and RAG2, and associated component HMGB1 or HMGB2. Interacts (in cytoplasm upon starvation) with BECN1; inhibits the interaction of BECN1 and BCL2 leading to promotion of autophagy. Interacts with KPNA1; involved in nuclear import. Interacts with SREBF1, TLR2, TLR4, TLR9, APEX1, FEN1, POLB, TERT. Interacts with AGER, PTPRZ1, IL1B, MSH2, XPA, XPC, HNF1A, TP53. Interacts with CD24; the probable CD24:SIGLEC10 complex is proposed to inhibit HGMB1-mediated tissue damage immune response. Interacts with THBD; prevents HGMB1 interaction with ACER/RAGE and inhibits HGMB1 pro-inflammatory activity. Interacts with HAVCR2; impairs HMGB1 binding to B-DNA and likely HMGB1-mediated innate immune response. Interacts with XPO1; mediating nuclear export. Interacts with receptor RAGE/AGER. Post-translationally, acetylated on multiple sites upon stimulation with LPS. Acetylation on lysine residues in the nuclear localization signals (NLS 1 and NLS 2) leads to cytoplasmic localization and subsequent secretion. Acetylation on Lys-3 results in preferential binding to DNA ends and impairs DNA bending activity. Phosphorylated at serine residues. Phosphorylation in both NLS regions is required for cytoplasmic translocation followed by secretion. In terms of processing, reduction/oxidation of cysteine residues Cys-23, Cys-45 and Cys-106 and a possible intramolecular disulfide bond involving Cys-23 and Cys-45 give rise to different redox forms with specific functional activities in various cellular compartments: 1- Fully reduced HGMB1 (HMGB1C23hC45hC106h), 2- Disulfide HMGB1 (HMGB1C23-C45C106h) and 3- Sulfonyl HMGB1 (HMGB1C23soC45soC106so). Post-translationally, poly-ADP-ribosylated by PARP1 when secreted following stimulation with LPS. In vitro cleavage by CASP1 is liberating a HMG box 1-containing peptide which may mediate immunogenic activity; the peptide antagonizes apoptosis-induced immune tolerance. Can be proteolytically cleaved by a thrombin:thrombomodulin complex; reduces binding to heparin and pro-inflammatory activities. In terms of processing, forms covalent cross-links mediated by transglutaminase TGM2, between a glutamine and the epsilon-amino group of a lysine residue, forming homopolymers and heteropolymers. Serum levels are found elevated in mice with modeled systemic lupus erythematosus (SLE) and are correlated with SLE disease activity.

The protein resides in the nucleus. It is found in the cytoplasm. The protein localises to the chromosome. It localises to the cell membrane. Its subcellular location is the endosome. The protein resides in the endoplasmic reticulum-Golgi intermediate compartment. It is found in the secreted. Functionally, multifunctional redox sensitive protein with various roles in different cellular compartments. In the nucleus is one of the major chromatin-associated non-histone proteins and acts as a DNA chaperone involved in replication, transcription, chromatin remodeling, V(D)J recombination, DNA repair and genome stability. Proposed to be an universal biosensor for nucleic acids. Promotes host inflammatory response to sterile and infectious signals and is involved in the coordination and integration of innate and adaptive immune responses. In the cytoplasm functions as a sensor and/or chaperone for immunogenic nucleic acids implicating the activation of TLR9-mediated immune responses, and mediates autophagy. Acts as a danger associated molecular pattern (DAMP) molecule that amplifies immune responses during tissue injury. Released to the extracellular environment can bind DNA, nucleosomes, IL-1 beta, CXCL12, AGER isoform 2/sRAGE, lipopolysaccharide (LPS) and lipoteichoic acid (LTA), and activates cells through engagement of multiple surface receptors. In the extracellular compartment fully reduced HMGB1 (released by necrosis) acts as a chemokine, disulfide HMGB1 (actively secreted) as a cytokine, and sulfonyl HMGB1 (released from apoptotic cells) promotes immunological tolerance. Has proangiogenic activity. May be involved in platelet activation. Binds to phosphatidylserine and phosphatidylethanolamide. Bound to RAGE mediates signaling for neuronal outgrowth. May play a role in accumulation of expanded polyglutamine (polyQ) proteins. In terms of biological role, nuclear functions are attributed to fully reduced HGMB1. Associates with chromatin and binds DNA with a preference to non-canonical DNA structures such as single-stranded DNA, DNA-containing cruciforms or bent structures, supercoiled DNA and ZDNA. Can bent DNA and enhance DNA flexibility by looping thus providing a mechanism to promote activities on various gene promoters by enhancing transcription factor binding and/or bringing distant regulatory sequences into close proximity. May be involved in nucleotide excision repair (NER), mismatch repair (MMR) and base excision repair (BER) pathways, and double strand break repair such as non-homologous end joining (NHEJ). Involved in V(D)J recombination by acting as a cofactor of the RAG complex: acts by stimulating cleavage and RAG protein binding at the 23 bp spacer of conserved recombination signal sequences (RSS). In vitro can displace histone H1 from highly bent DNA. Can restructure the canonical nucleosome leading to relaxation of structural constraints for transcription factor-binding. Enhances binding of sterol regulatory element-binding proteins (SREBPs) such as SREBF1 to their cognate DNA sequences and increases their transcriptional activities. Facilitates binding of TP53 to DNA. Proposed to be involved in mitochondrial quality control and autophagy in a transcription-dependent fashion implicating HSPB1; however, this function has been questioned. Can modulate the activity of the telomerase complex and may be involved in telomere maintenance. Its function is as follows. In the cytoplasm proposed to dissociate the BECN1:BCL2 complex via competitive interaction with BECN1 leading to autophagy activation. Can protect BECN1 and ATG5 from calpain-mediated cleavage and thus proposed to control their proautophagic and proapoptotic functions and to regulate the extent and severity of inflammation-associated cellular injury. In myeloid cells has a protective role against endotoxemia and bacterial infection by promoting autophagy. Involved in endosomal translocation and activation of TLR9 in response to CpG-DNA in macrophages. In the extracellular compartment (following either active secretion or passive release) involved in regulation of the inflammatory response. Fully reduced HGMB1 (which subsequently gets oxidized after release) in association with CXCL12 mediates the recruitment of inflammatory cells during the initial phase of tissue injury; the CXCL12:HMGB1 complex triggers CXCR4 homodimerization. Induces the migration of monocyte-derived immature dendritic cells and seems to regulate adhesive and migratory functions of neutrophils implicating AGER/RAGE and ITGAM. Can bind to various types of DNA and RNA including microbial unmethylated CpG-DNA to enhance the innate immune response to nucleic acids. Proposed to act in promiscuous DNA/RNA sensing which cooperates with subsequent discriminative sensing by specific pattern recognition receptors. Promotes extracellular DNA-induced AIM2 inflammasome activation implicating AGER/RAGE. Disulfide HMGB1 binds to transmembrane receptors, such as AGER/RAGE, TLR2, TLR4 and probably TREM1, thus activating their signal transduction pathways. Mediates the release of cytokines/chemokines such as TNF, IL-1, IL-6, IL-8, CCL2, CCL3, CCL4 and CXCL10. Promotes secretion of interferon-gamma by macrophage-stimulated natural killer (NK) cells in concert with other cytokines like IL-2 or IL-12. TLR4 is proposed to be the primary receptor promoting macrophage activation and signaling through TLR4 seems to implicate LY96/MD-2. In bacterial LPS- or LTA-mediated inflammatory responses binds to the endotoxins and transfers them to CD14 for signaling to the respective TLR4:LY96 and TLR2 complexes. Contributes to tumor proliferation by association with ACER/RAGE. Can bind to IL1-beta and signals through the IL1R1:IL1RAP receptor complex. Binding to class A CpG activates cytokine production in plasmacytoid dendritic cells implicating TLR9, MYD88 and AGER/RAGE and can activate autoreactive B cells. Via HMGB1-containing chromatin immune complexes may also promote B cell responses to endogenous TLR9 ligands through a B-cell receptor (BCR)-dependent and ACER/RAGE-independent mechanism. Inhibits phagocytosis of apoptotic cells by macrophages; the function is dependent on poly-ADP-ribosylation and involves binding to phosphatidylserine on the cell surface of apoptotic cells. In adaptive immunity may be involved in enhancing immunity through activation of effector T-cells and suppression of regulatory T (TReg) cells. In contrast, without implicating effector or regulatory T-cells, required for tumor infiltration and activation of T-cells expressing the lymphotoxin LTA:LTB heterotrimer thus promoting tumor malignant progression. Also reported to limit proliferation of T-cells. Released HMGB1:nucleosome complexes formed during apoptosis can signal through TLR2 to induce cytokine production. Involved in induction of immunological tolerance by apoptotic cells; its pro-inflammatory activities when released by apoptotic cells are neutralized by reactive oxygen species (ROS)-dependent oxidation specifically on Cys-106. During macrophage activation by activated lymphocyte-derived self apoptotic DNA (ALD-DNA) promotes recruitment of ALD-DNA to endosomes. The protein is High mobility group protein B1 (Hmgb1) of Mus musculus (Mouse).